We begin with the raw amino-acid sequence, 148 residues long: MDTNNKDDSIIRFSVSLQQNLLDELDNRIIKNGYSSRSELVRDLIREKLVEDNWIEDSPDDKSKVAVLVVIYDHHQRELNQRMIDIQHASETHVLCTTHIHMDSHNCLETIILKGSSAEVQRLQLEIGGLRGVKFAKLTKASSFESNE.

Positions 88, 99, 101, and 107 each coordinate Ni(2+).

It belongs to the transcriptional regulatory CopG/NikR family. The cofactor is Ni(2+).

Functionally, transcriptional regulator. This chain is Putative nickel-responsive regulator, found in Helicobacter acinonychis (strain Sheeba).